The sequence spans 517 residues: Nicotine N-demethylase CYP82E4 (517 aa).

The helical transmembrane segment at 2–22 (VFPIEAIVGLVTFTFLFFFLW) threads the bilayer. Lysine 254 participates in a covalent cross-link: Glycyl lysine isopeptide (Lys-Gly) (interchain with G-Cter in ubiquitin). Cysteine 457 contacts heme.

The protein belongs to the cytochrome P450 family. CYP82E2 subfamily. The cofactor is heme. As to expression, expressed at low levels in green leaves.

It is found in the membrane. It carries out the reaction (S)-nicotine + reduced [NADPH--hemoprotein reductase] + O2 = (S)-nornicotine + formaldehyde + oxidized [NADPH--hemoprotein reductase] + H2O + H(+). It participates in alkaloid biosynthesis; nicotine biosynthesis. Its function is as follows. Involved in the biosynthesis of pyridine alkaloid natural products, leading mainly to the production of anabasine, anatabine, nicotine and nornicotine, effective deterrents against herbivores with antiparasitic and pesticide properties (neurotoxins); nornicotine serves as the precursor in the synthesis of the carcinogen compound N'-nitrosonornicotine (NNN). Catalyzes the demethylation of nicotine to form nornicotine. In Nicotiana tabacum (Common tobacco), this protein is Nicotine N-demethylase CYP82E4.